Here is a 375-residue protein sequence, read N- to C-terminus: tRNA-specific 2-thiouridylase MnmA (375 aa).

ATP is bound by residues 18–25 (GMSGGVDS) and methionine 44. Residues 104–106 (NPD) form an interaction with target base in tRNA region. Residue cysteine 109 is the Nucleophile of the active site. Cysteine 109 and cysteine 206 form a disulfide bridge. Glycine 134 lines the ATP pocket. The interaction with tRNA stretch occupies residues 156–158 (KDQ). Cysteine 206 (cysteine persulfide intermediate) is an active-site residue. Positions 318–319 (RY) are interaction with tRNA.

It belongs to the MnmA/TRMU family.

It is found in the cytoplasm. The catalysed reaction is S-sulfanyl-L-cysteinyl-[protein] + uridine(34) in tRNA + AH2 + ATP = 2-thiouridine(34) in tRNA + L-cysteinyl-[protein] + A + AMP + diphosphate + H(+). In terms of biological role, catalyzes the 2-thiolation of uridine at the wobble position (U34) of tRNA, leading to the formation of s(2)U34. This chain is tRNA-specific 2-thiouridylase MnmA, found in Colwellia psychrerythraea (strain 34H / ATCC BAA-681) (Vibrio psychroerythus).